The following is a 142-amino-acid chain: UPF0305 protein MK0666 (142 aa).

The protein belongs to the UPF0305 family.

This Methanopyrus kandleri (strain AV19 / DSM 6324 / JCM 9639 / NBRC 100938) protein is UPF0305 protein MK0666.